The primary structure comprises 237 residues: Large ribosomal subunit protein uL1 (237 aa).

It belongs to the universal ribosomal protein uL1 family. Part of the 50S ribosomal subunit.

Its function is as follows. Binds directly to 23S rRNA. The L1 stalk is quite mobile in the ribosome, and is involved in E site tRNA release. Functionally, protein L1 is also a translational repressor protein, it controls the translation of the L11 operon by binding to its mRNA. This chain is Large ribosomal subunit protein uL1, found in Synechococcus sp. (strain ATCC 27144 / PCC 6301 / SAUG 1402/1) (Anacystis nidulans).